The chain runs to 37 residues: Large ribosomal subunit protein bL36 (37 aa).

This sequence belongs to the bacterial ribosomal protein bL36 family.

This chain is Large ribosomal subunit protein bL36, found in Mycobacterium leprae (strain Br4923).